The sequence spans 275 residues: 4-diphosphocytidyl-2-C-methyl-D-erythritol kinase (275 aa).

Lysine 14 is a catalytic residue. 98-108 (PMGAGLGGGSS) is an ATP binding site. Aspartate 140 is an active-site residue.

It belongs to the GHMP kinase family. IspE subfamily.

The catalysed reaction is 4-CDP-2-C-methyl-D-erythritol + ATP = 4-CDP-2-C-methyl-D-erythritol 2-phosphate + ADP + H(+). Its pathway is isoprenoid biosynthesis; isopentenyl diphosphate biosynthesis via DXP pathway; isopentenyl diphosphate from 1-deoxy-D-xylulose 5-phosphate: step 3/6. In terms of biological role, catalyzes the phosphorylation of the position 2 hydroxy group of 4-diphosphocytidyl-2C-methyl-D-erythritol. The chain is 4-diphosphocytidyl-2-C-methyl-D-erythritol kinase from Francisella tularensis subsp. tularensis (strain FSC 198).